Here is a 153-residue protein sequence, read N- to C-terminus: Lectin-like protein EP153R (153 aa).

Residues 1-30 lie on the Cytoplasmic side of the membrane; that stretch reads MYFKKKYIGLIDKNCEKKILDDSSTIKICY. The helical transmembrane segment at 31–51 threads the bilayer; it reads ILIGILIGTNMITLIYNFIFW. Topologically, residues 52–153 are extracellular; it reads DNYIKCYRNN…YTDLLFICGK (102 aa). Cysteine 67 and cysteine 78 are joined by a disulfide. N-linked (GlcNAc...) asparagine; by host glycans are attached at residues asparagine 83, asparagine 89, asparagine 101, asparagine 107, asparagine 113, asparagine 120, asparagine 127, and asparagine 143. Cysteine 97 and cysteine 151 are joined by a disulfide.

It belongs to the asfivirus lectin-like protein family. Homodimer.

It localises to the host endoplasmic reticulum membrane. Functionally, down-regulates MHC-I expression by impairing the appropriate configuration or presentation into the plasma membrane of the latter. Participates in viral hemadsorption, which may help viral spread. Reduces the transactivating activity of host TP53, thus inhibiting apoptosis. Non-essential for virus growth in swine macrophage cell cultures. The chain is Lectin-like protein EP153R from African swine fever virus (strain Badajoz 1971 Vero-adapted) (Ba71V).